The primary structure comprises 520 residues: MSAMREKGDIIIGIDAGTSVLKAVAFDFSGRQIESAAVRNTYVTGDHGAVTQSLAQTWQDCARALRDLGAKLPGLAQRTAAIAVTGQGDGTWLVGKDNRPVGDAWIWLDARAASTVTRLAAGPMNRARFEATGTGLNTCQQGAQMAHMDTIAPELLDNAEAALHCKDWLYLNLTGVRATDPSEASFTFGNFRTRQYDDVVIEALGLQKRRNLLPEIIDGSQSQHPLSAEAAAATGLLAGTPVSLGYVDMAMTALGAGVCGGTAGAGCSTIGSTGVHMRAKPVADIHLNKEGTGYVIALPIPGIVTQVQTNMGATINIDWILQVAADLMSTPEKPVSLGDLIPRLDDWFNASRPGAILYHPYISEAGERGPFVNANARAGFIGLSSRDRFPELVRSVVEGLGMATRDCYAAMGEMPAELRITGGAARSKALRGTLSAAVNAPVRVSAREEAGAAGAAMMAAVAIGAYPAMDDCIAEWVEPLLGASEAPDAARAHQYEELFVAYREARLALAPVWDKLASGK.

This sequence belongs to the FGGY kinase family.

It catalyses the reaction erythritol + ATP = D-erythritol 1-phosphate + ADP + H(+). It participates in carbohydrate metabolism; erythritol degradation. Catalyzes the phosphorylation of erythritol to D-erythritol-1-phosphate. This chain is Erythritol kinase, found in Brucella abortus (strain 2308).